The following is a 213-amino-acid chain: Orotate phosphoribosyltransferase (213 aa).

5-phospho-alpha-D-ribose 1-diphosphate is bound at residue lysine 26. Orotate is bound at residue 34-35 (FF). Residues 72-73 (YK), arginine 99, lysine 100, lysine 103, histidine 105, and 124-132 (DDVITAGTA) contribute to the 5-phospho-alpha-D-ribose 1-diphosphate site. 2 residues coordinate orotate: threonine 128 and arginine 156.

This sequence belongs to the purine/pyrimidine phosphoribosyltransferase family. PyrE subfamily. Homodimer. It depends on Mg(2+) as a cofactor.

It catalyses the reaction orotidine 5'-phosphate + diphosphate = orotate + 5-phospho-alpha-D-ribose 1-diphosphate. Its pathway is pyrimidine metabolism; UMP biosynthesis via de novo pathway; UMP from orotate: step 1/2. Its function is as follows. Catalyzes the transfer of a ribosyl phosphate group from 5-phosphoribose 1-diphosphate to orotate, leading to the formation of orotidine monophosphate (OMP). The polypeptide is Orotate phosphoribosyltransferase (Salmonella choleraesuis (strain SC-B67)).